The primary structure comprises 327 residues: Nucleotide-binding protein Mflv_3714 (327 aa).

Over residues 1–22 (MTRQGMRDDLRGEADSVVHDGT) the composition is skewed to basic and acidic residues. Residues 1–29 (MTRQGMRDDLRGEADSVVHDGTDDIDNEN) form a disordered region. ATP is bound at residue 50–57 (GLSGAGRG). Residue 101–104 (DVRS) coordinates GTP.

It belongs to the RapZ-like family.

Displays ATPase and GTPase activities. This Mycolicibacterium gilvum (strain PYR-GCK) (Mycobacterium gilvum (strain PYR-GCK)) protein is Nucleotide-binding protein Mflv_3714.